A 360-amino-acid chain; its full sequence is DNA replication and repair protein RecF (360 aa).

33–40 provides a ligand contact to ATP; it reads GENGSGKT.

This sequence belongs to the RecF family.

The protein resides in the cytoplasm. In terms of biological role, the RecF protein is involved in DNA metabolism; it is required for DNA replication and normal SOS inducibility. RecF binds preferentially to single-stranded, linear DNA. It also seems to bind ATP. In Rickettsia africae (strain ESF-5), this protein is DNA replication and repair protein RecF.